The primary structure comprises 186 residues: Chromophore lyase CpcS/CpeS 1 (186 aa).

This sequence belongs to the CpcS/CpeS biliprotein lyase family.

Covalently attaches a chromophore to Cys residue(s) of phycobiliproteins. In Synechocystis sp. (strain ATCC 27184 / PCC 6803 / Kazusa), this protein is Chromophore lyase CpcS/CpeS 1.